We begin with the raw amino-acid sequence, 443 residues long: Probable D-serine dehydratase (443 aa).

Lysine 118 carries the N6-(pyridoxal phosphate)lysine modification.

The protein belongs to the serine/threonine dehydratase family. DsdA subfamily. Requires pyridoxal 5'-phosphate as cofactor.

It catalyses the reaction D-serine = pyruvate + NH4(+). This Vibrio parahaemolyticus serotype O3:K6 (strain RIMD 2210633) protein is Probable D-serine dehydratase.